The following is a 342-amino-acid chain: Cytochrome c oxidase subunit 2 (342 aa).

An N-terminal signal peptide occupies residues 1–22 (MKLWKTASRFLPLSFLTLFLTG). C23 carries N-palmitoyl cysteine lipidation. The S-diacylglycerol cysteine moiety is linked to residue C23. Residues 23-50 (CLGEENLTALDPKGPQAQWIYDNMILSI) are Extracellular-facing. The cytochrome c oxidase subunit II stretch occupies residues 23-249 (CLGEENLTAL…MSAEVEEPTE (227 aa)). The helical transmembrane segment at 51 to 69 (IVMALVSIVVFAIFFIILA) threads the bilayer. The Cytoplasmic segment spans residues 70–89 (KYRRKPGDDEIPKQVHGNTA). The helical transmembrane segment at 90-108 (LEITWTVIPIILLVILAVP) threads the bilayer. Topologically, residues 109–342 (TITGTFMFAD…AYLRSLKVME (234 aa)) are extracellular. Residues H175, C210, C214, and H218 each contribute to the Cu cation site. Positions 250-342 (TLANQGRQVF…AYLRSLKVME (93 aa)) constitute a Cytochrome c domain. Residues C264, C267, H268, and M317 each coordinate heme c.

The protein belongs to the cytochrome c oxidase subunit 2 family. Cu cation is required as a cofactor. Requires heme c as cofactor.

It is found in the cell membrane. The catalysed reaction is 4 Fe(II)-[cytochrome c] + O2 + 8 H(+)(in) = 4 Fe(III)-[cytochrome c] + 2 H2O + 4 H(+)(out). Its function is as follows. Subunits I and II form the functional core of the enzyme complex. Electrons originating in cytochrome c are transferred via heme a and Cu(A) to the binuclear center formed by heme a3 and Cu(B). The chain is Cytochrome c oxidase subunit 2 (ctaC) from Alkalihalophilus pseudofirmus (strain ATCC BAA-2126 / JCM 17055 / OF4) (Bacillus pseudofirmus).